The chain runs to 417 residues: Serpin H1 (417 aa).

A signal peptide spans 1–17; that stretch reads MRSLLLGTLCLLAVALA. Lys-93 is subject to N6-succinyllysine. N-linked (GlcNAc...) asparagine glycans are attached at residues Asn-119 and Asn-124. Ser-140 bears the Phosphoserine mark. Lys-206 is modified (N6-acetyllysine). Lys-295 carries the N6-succinyllysine modification. Lys-318 bears the N6-acetyllysine mark. A glycan (N-linked (GlcNAc...) asparagine) is linked at Asn-394. The Prevents secretion from ER motif lies at 414 to 417; that stretch reads RDEL.

The protein belongs to the serpin family.

Its subcellular location is the endoplasmic reticulum lumen. Its function is as follows. Binds specifically to collagen. Could be involved as a chaperone in the biosynthetic pathway of collagen. This chain is Serpin H1 (Serpinh1), found in Mus musculus (Mouse).